A 115-amino-acid chain; its full sequence is uncharacterized protein (115 aa).

Residues 1 to 86 are disordered; that stretch reads RRPARSGGDG…LSSQLVRPSR (86 aa).

This is an uncharacterized protein from Homo sapiens (Human).